A 146-amino-acid chain; its full sequence is Small ribosomal subunit protein uS5 (146 aa).

The S5 DRBM domain maps to F8–V71.

It belongs to the universal ribosomal protein uS5 family. As to quaternary structure, part of the 30S ribosomal subunit. Contacts proteins S4 and S8.

Functionally, with S4 and S12 plays an important role in translational accuracy. In terms of biological role, located at the back of the 30S subunit body where it stabilizes the conformation of the head with respect to the body. The polypeptide is Small ribosomal subunit protein uS5 (Campylobacter hominis (strain ATCC BAA-381 / DSM 21671 / CCUG 45161 / LMG 19568 / NCTC 13146 / CH001A)).